The following is a 539-amino-acid chain: Putative cysteine ligase BshC (539 aa).

ADP contacts are provided by residues S146 and 384–386 (ERH). A coiled-coil region spans residues 455-475 (LLKNAAFIQDQLQFLERTVMK). ADP contacts are provided by residues 490–493 (RIQN), W506, and Y510.

This sequence belongs to the BshC family. In terms of assembly, homodimer in solution.

Functionally, involved in bacillithiol (BSH) biosynthesis. May catalyze the last step of the pathway, the addition of cysteine to glucosamine malate (GlcN-Mal) to generate BSH. This is Putative cysteine ligase BshC from Bacillus subtilis (strain 168).